We begin with the raw amino-acid sequence, 386 residues long: Glucose-1-phosphate adenylyltransferase (386 aa).

Alpha-D-glucose 1-phosphate-binding positions include Tyr99, Gly164, 179 to 180 (EK), and Ser190.

It belongs to the bacterial/plant glucose-1-phosphate adenylyltransferase family. In terms of assembly, homotetramer.

It carries out the reaction alpha-D-glucose 1-phosphate + ATP + H(+) = ADP-alpha-D-glucose + diphosphate. It participates in glycan biosynthesis; glycogen biosynthesis. In terms of biological role, involved in the biosynthesis of ADP-glucose, a building block required for the elongation reactions to produce glycogen. Catalyzes the reaction between ATP and alpha-D-glucose 1-phosphate (G1P) to produce pyrophosphate and ADP-Glc. In Clostridioides difficile (strain 630) (Peptoclostridium difficile), this protein is Glucose-1-phosphate adenylyltransferase.